Consider the following 180-residue polypeptide: tRNA (cytidine(56)-2'-O)-methyltransferase (180 aa).

Residues Leu83, 115–119 (GAEKV), and 133–140 (VGNQPHSE) each bind S-adenosyl-L-methionine.

It belongs to the aTrm56 family. In terms of assembly, homodimer.

It is found in the cytoplasm. The enzyme catalyses cytidine(56) in tRNA + S-adenosyl-L-methionine = 2'-O-methylcytidine(56) in tRNA + S-adenosyl-L-homocysteine + H(+). Specifically catalyzes the AdoMet-dependent 2'-O-ribose methylation of cytidine at position 56 in tRNAs. The protein is tRNA (cytidine(56)-2'-O)-methyltransferase of Methanococcus aeolicus (strain ATCC BAA-1280 / DSM 17508 / OCM 812 / Nankai-3).